A 221-amino-acid polypeptide reads, in one-letter code: Carotenogenesis protein CarR (221 aa).

The next 6 membrane-spanning stretches (helical) occupy residues 56 to 76, 79 to 99, 107 to 127, 136 to 156, 166 to 186, and 191 to 211; these read LGLLAAVVLLAVGAVTGPLLL, APLLAMLVGTSAVCAWGALSP, LGVGLAVVSAAALVLARGAPH, VCTVSHLAIGVVPLVVALFAL, AVVAGLSVGSTGALLGELACE, and HVLSHHLLAWVVITVVLVVIS.

Its subcellular location is the cell inner membrane. Negative regulator of the carotenoid synthesis regulon. It is probably inactivated by protoporphyrin IX in the presence of blue light. Inactivation of CarR leads to loss of negative control over the carotenogenesis protein CarQ. The chain is Carotenogenesis protein CarR (carR) from Myxococcus xanthus.